A 198-amino-acid chain; its full sequence is MORN repeat-containing protein 4 homolog (198 aa).

Ala-2 carries the N-acetylalanine modification. A compositionally biased stretch (low complexity) spans 23–45 (QHQQHPHQQGQHGHHQQGQGQSQ). Positions 23 to 46 (QHQQHPHQQGQHGHHQQGQGQSQY) are disordered. 4 MORN repeats span residues 64-87 (YIGEWNQRGQKHGIGHLQFADGTR), 88-109 (YDGQFQEGLSQGVGCLWFADGA), 111-132 (YEGEFHQGWFHGNGIFWRADGM), and 134-153 (YEGEFRGGKIWGLGLLTFQD).

As to quaternary structure, interacts with ninaC. Post-translationally, phosphorylated under dark conditions and is dephosphorylated by light exposure. As to expression, retina. Expressed primarily in the phototransducing compartment of photoreceptor cells, the rhabdomeres and its expression is dependent on ninaC protein (at protein level).

It is found in the membrane. Its subcellular location is the cell projection. It localises to the rhabdomere membrane. Its function is as follows. Plays a role in promoting axonal degeneration following neuronal injury by toxic insult or trauma. Organizes rhabdomeric components to suppress random activation of the phototransduction cascade and thus increases the signaling fidelity of dark-adapted photoreceptors. The rtp/ninaC complex is required for stability of inad and inac and the normal termination of phototransduction in the retina. The polypeptide is MORN repeat-containing protein 4 homolog (Drosophila melanogaster (Fruit fly)).